Here is a 251-residue protein sequence, read N- to C-terminus: Precorrin-4 C(11)-methyltransferase (251 aa).

It belongs to the precorrin methyltransferase family.

It carries out the reaction precorrin-4 + S-adenosyl-L-methionine = precorrin-5 + S-adenosyl-L-homocysteine. It functions in the pathway cofactor biosynthesis; adenosylcobalamin biosynthesis; cob(II)yrinate a,c-diamide from precorrin-2 (aerobic route): step 4/10. Functionally, catalyzes the methylation of C-11 in precorrin-4 to form precorrin-5. The chain is Precorrin-4 C(11)-methyltransferase (cobM) from Mycobacterium tuberculosis (strain CDC 1551 / Oshkosh).